The chain runs to 534 residues: CTP synthase (534 aa).

The segment at 1–265 (MKYIIVTGGV…SNYLLKKLIL (265 aa)) is amidoligase domain. Serine 12 lines the CTP pocket. Serine 12 contacts UTP. Residue 13–18 (GLGKGI) coordinates ATP. Tyrosine 53 contributes to the L-glutamine binding site. An ATP-binding site is contributed by aspartate 70. Mg(2+)-binding residues include aspartate 70 and glutamate 140. Residues 147–149 (DIE), 186–191 (KTKPTQ), and lysine 222 each bind CTP. UTP contacts are provided by residues 186 to 191 (KTKPTQ) and lysine 222. Residues 289 to 530 (NVAIVGKYTH…MGAMLKKSKE (242 aa)) form the Glutamine amidotransferase type-1 domain. Glycine 352 provides a ligand contact to L-glutamine. Cysteine 379 acts as the Nucleophile; for glutamine hydrolysis in catalysis. L-glutamine-binding positions include 380-383 (LGMQ), glutamate 403, and arginine 460. Catalysis depends on residues histidine 503 and glutamate 505.

It belongs to the CTP synthase family. Homotetramer.

The catalysed reaction is UTP + L-glutamine + ATP + H2O = CTP + L-glutamate + ADP + phosphate + 2 H(+). It carries out the reaction L-glutamine + H2O = L-glutamate + NH4(+). It catalyses the reaction UTP + NH4(+) + ATP = CTP + ADP + phosphate + 2 H(+). It participates in pyrimidine metabolism; CTP biosynthesis via de novo pathway; CTP from UDP: step 2/2. Allosterically activated by GTP, when glutamine is the substrate; GTP has no effect on the reaction when ammonia is the substrate. The allosteric effector GTP functions by stabilizing the protein conformation that binds the tetrahedral intermediate(s) formed during glutamine hydrolysis. Inhibited by the product CTP, via allosteric rather than competitive inhibition. In terms of biological role, catalyzes the ATP-dependent amination of UTP to CTP with either L-glutamine or ammonia as the source of nitrogen. Regulates intracellular CTP levels through interactions with the four ribonucleotide triphosphates. In Methanococcoides burtonii (strain DSM 6242 / NBRC 107633 / OCM 468 / ACE-M), this protein is CTP synthase.